The sequence spans 334 residues: Glyceraldehyde-3-phosphate dehydrogenase (334 aa).

NAD(+) is bound by residues 12–13 and G111; that span reads TI. 140–142 is a D-glyceraldehyde 3-phosphate binding site; it reads SCN. The Nucleophile role is filled by C141. R167 contributes to the NAD(+) binding site. 192–193 contributes to the D-glyceraldehyde 3-phosphate binding site; that stretch reads HG. Position 298 (Q298) interacts with NAD(+).

This sequence belongs to the glyceraldehyde-3-phosphate dehydrogenase family. Homotetramer.

Its subcellular location is the cytoplasm. It catalyses the reaction D-glyceraldehyde 3-phosphate + phosphate + NADP(+) = (2R)-3-phospho-glyceroyl phosphate + NADPH + H(+). The enzyme catalyses D-glyceraldehyde 3-phosphate + phosphate + NAD(+) = (2R)-3-phospho-glyceroyl phosphate + NADH + H(+). The protein operates within carbohydrate degradation; glycolysis; pyruvate from D-glyceraldehyde 3-phosphate: step 1/5. The sequence is that of Glyceraldehyde-3-phosphate dehydrogenase from Thermococcus onnurineus (strain NA1).